The sequence spans 517 residues: Protein AGENET DOMAIN (AGD)-CONTAINING P1 (517 aa).

A disordered region spans residues 1-35 (MLRPRRSLGVSSPAKQRKKAAPKNSMATRANRKRL). 2 plant Agenet, chromatin-binding regions span residues 37–111 (SYLK…PPMS) and 117–173 (KKIV…EWVD). A disordered region spans residues 177–202 (KPPLEETEEEEDESEEDKLDDSEDEE). Residues 181–202 (EETEEEEDESEEDKLDDSEDEE) show a composition bias toward acidic residues. 4 plant Agenet, chromatin-binding regions span residues 219–287 (QMFS…PRDE), 289–345 (IDFA…DWVD), 378–446 (QAFS…LESV), and 449–505 (SPFE…EWID).

Expressed ubiquitously during vegetative stage, in meristems (e.g. root tips and shoot apical meristem), and in ovules and young seeds during reproductive stage.

The protein localises to the nucleus. In terms of biological role, heterochromatin-binding protein that preferentially occupies long transposons and specifically recognizes the histone H3 'Lys-9' methylation (H3K9me) marks, with a stronger affinity for dimethylated H3K9 (H3K9me2). Required for transcriptional silencing, non-CG DNA methylation (e.g. CHG and CHH regions), and H3K9 dimethylation (H3K9me2) at some loci. Mediates heterochromatin phase separation and chromocenter formation. This is Protein AGENET DOMAIN (AGD)-CONTAINING P1 from Arabidopsis thaliana (Mouse-ear cress).